The primary structure comprises 400 residues: Argininosuccinate synthase (400 aa).

ATP is bound at residue 8 to 16 (AYSGGLDTS). Tyr-87 is a binding site for L-citrulline. Residue Gly-117 coordinates ATP. L-aspartate contacts are provided by Thr-119, Asn-123, and Asp-124. Asn-123 provides a ligand contact to L-citrulline. 4 residues coordinate L-citrulline: Arg-127, Ser-175, Glu-260, and Tyr-272.

This sequence belongs to the argininosuccinate synthase family. Type 1 subfamily. Homotetramer.

It is found in the cytoplasm. The catalysed reaction is L-citrulline + L-aspartate + ATP = 2-(N(omega)-L-arginino)succinate + AMP + diphosphate + H(+). It functions in the pathway amino-acid biosynthesis; L-arginine biosynthesis; L-arginine from L-ornithine and carbamoyl phosphate: step 2/3. In Mycobacterium sp. (strain KMS), this protein is Argininosuccinate synthase.